The sequence spans 188 residues: Pyridoxal 5'-phosphate synthase subunit PdxT (188 aa).

Residue 46-48 (GES) coordinates L-glutamine. The active-site Nucleophile is the cysteine 78. L-glutamine contacts are provided by residues arginine 106 and 132–133 (IR). Active-site charge relay system residues include histidine 169 and glutamate 171.

The protein belongs to the glutaminase PdxT/SNO family. In the presence of PdxS, forms a dodecamer of heterodimers. Only shows activity in the heterodimer.

The catalysed reaction is aldehydo-D-ribose 5-phosphate + D-glyceraldehyde 3-phosphate + L-glutamine = pyridoxal 5'-phosphate + L-glutamate + phosphate + 3 H2O + H(+). The enzyme catalyses L-glutamine + H2O = L-glutamate + NH4(+). The protein operates within cofactor biosynthesis; pyridoxal 5'-phosphate biosynthesis. Its function is as follows. Catalyzes the hydrolysis of glutamine to glutamate and ammonia as part of the biosynthesis of pyridoxal 5'-phosphate. The resulting ammonia molecule is channeled to the active site of PdxS. The polypeptide is Pyridoxal 5'-phosphate synthase subunit PdxT (Tropheryma whipplei (strain Twist) (Whipple's bacillus)).